A 120-amino-acid polypeptide reads, in one-letter code: Large ribosomal subunit protein bL20 (120 aa).

This sequence belongs to the bacterial ribosomal protein bL20 family.

Binds directly to 23S ribosomal RNA and is necessary for the in vitro assembly process of the 50S ribosomal subunit. It is not involved in the protein synthesizing functions of that subunit. The protein is Large ribosomal subunit protein bL20 of Blochmanniella pennsylvanica (strain BPEN).